Consider the following 124-residue polypeptide: MPTIQQLIRDEREKITKKTKSPALKNCPQRRGVCTRVYTTTPKKPNSALRKVARVRLTSGFEVTAYIPGIGHNLQEHSVVMIRGGRVKDLPGVRYHIIRGTLDTAGVKDRRQSRSKYGAKRPKA.

At Asp89 the chain carries 3-methylthioaspartic acid. The disordered stretch occupies residues 105–124 (AGVKDRRQSRSKYGAKRPKA). Positions 113–124 (SRSKYGAKRPKA) are enriched in basic residues.

The protein belongs to the universal ribosomal protein uS12 family. In terms of assembly, part of the 30S ribosomal subunit. Contacts proteins S8 and S17. May interact with IF1 in the 30S initiation complex.

With S4 and S5 plays an important role in translational accuracy. Functionally, interacts with and stabilizes bases of the 16S rRNA that are involved in tRNA selection in the A site and with the mRNA backbone. Located at the interface of the 30S and 50S subunits, it traverses the body of the 30S subunit contacting proteins on the other side and probably holding the rRNA structure together. The combined cluster of proteins S8, S12 and S17 appears to hold together the shoulder and platform of the 30S subunit. This is Small ribosomal subunit protein uS12 (rpsL) from Synechococcus elongatus (strain ATCC 33912 / PCC 7942 / FACHB-805) (Anacystis nidulans R2).